The primary structure comprises 354 residues: Uroporphyrinogen decarboxylase (354 aa).

Substrate-binding positions include 27 to 31 (RQAGR), D77, Y154, S209, and H327.

Belongs to the uroporphyrinogen decarboxylase family. Homodimer.

Its subcellular location is the cytoplasm. It catalyses the reaction uroporphyrinogen III + 4 H(+) = coproporphyrinogen III + 4 CO2. The protein operates within porphyrin-containing compound metabolism; protoporphyrin-IX biosynthesis; coproporphyrinogen-III from 5-aminolevulinate: step 4/4. In terms of biological role, catalyzes the decarboxylation of four acetate groups of uroporphyrinogen-III to yield coproporphyrinogen-III. This chain is Uroporphyrinogen decarboxylase, found in Methylobacillus flagellatus (strain ATCC 51484 / DSM 6875 / VKM B-1610 / KT).